A 1066-amino-acid chain; its full sequence is Bifunctional cytochrome P450/NADPH--P450 reductase (1066 aa).

The segment at 1–480 (MAESVPIPEP…LAGNGATSSS (480 aa)) is cytochrome P450. Residue C407 participates in heme binding. The interval 481 to 1066 (THNIKAAANL…NERFATDVFD (586 aa)) is NADPH-P-450 reductase. Residues 500 to 641 (MAIFYGSNSG…DFEAWEDIVL (142 aa)) form the Flavodoxin-like domain. FMN contacts are provided by residues 506–511 (SNSGTC), 554–557 (SYEG), C588, and T596. One can recognise an FAD-binding FR-type domain in the interval 676-904 (QDVEEALVVA…RASSEAFHLP (229 aa)).

This sequence in the N-terminal section; belongs to the cytochrome P450 family. It depends on FAD as a cofactor. Requires FMN as cofactor. Heme serves as cofactor.

It localises to the membrane. It carries out the reaction an organic molecule + reduced [NADPH--hemoprotein reductase] + O2 = an alcohol + oxidized [NADPH--hemoprotein reductase] + H2O + H(+). The catalysed reaction is 2 oxidized [cytochrome P450] + NADPH = 2 reduced [cytochrome P450] + NADP(+) + H(+). With respect to regulation, stimulated NADPH--cytochrome reductase activity in the presence of substrate. Inhibited by fatty acid substrates longer than 13 carbons and the degree of inhibition increases with increasing chain length. Functionally, functions as a fatty acid monooxygenase. Catalyzes hydroxylation of fatty acids at omega-1, omega-2 and omega-3 positions. Shows activity toward fatty acids with a chain length of 9-18 carbons with optimum chain lengths of 12-14 carbons (lauric, tridecylic and myristic acids). Can also use shorter saturated fatty acids with a chain length of 9 or 10 carbons as substrates. Also displays a NADPH-dependent reductase activity in the C-terminal domain, which allows electron transfer from NADPH to the heme iron of the cytochrome P450 N-terminal domain. This Fusarium oxysporum (Fusarium vascular wilt) protein is Bifunctional cytochrome P450/NADPH--P450 reductase.